The sequence spans 43 residues: Large ribosomal subunit protein uL5 (43 aa).

It belongs to the universal ribosomal protein uL5 family. Part of the 50S ribosomal subunit; part of the 5S rRNA/L5/L18/L25 subcomplex. Contacts the 5S rRNA and the P site tRNA. Forms a bridge to the 30S subunit in the 70S ribosome.

This is one of the proteins that bind and probably mediate the attachment of the 5S RNA into the large ribosomal subunit, where it forms part of the central protuberance. In the 70S ribosome it contacts protein S13 of the 30S subunit (bridge B1b), connecting the 2 subunits; this bridge is implicated in subunit movement. Contacts the P site tRNA; the 5S rRNA and some of its associated proteins might help stabilize positioning of ribosome-bound tRNAs. This chain is Large ribosomal subunit protein uL5 (rplE), found in Proteus vulgaris.